The following is a 352-amino-acid chain: Heat-inducible transcription repressor HrcA (352 aa).

The protein belongs to the HrcA family.

Negative regulator of class I heat shock genes (grpE-dnaK-dnaJ and groELS operons). Prevents heat-shock induction of these operons. The chain is Heat-inducible transcription repressor HrcA from Lactobacillus gasseri (strain ATCC 33323 / DSM 20243 / BCRC 14619 / CIP 102991 / JCM 1131 / KCTC 3163 / NCIMB 11718 / NCTC 13722 / AM63).